Here is a 297-residue protein sequence, read N- to C-terminus: Phosphatidylserine decarboxylase proenzyme (297 aa).

Residues aspartate 92, histidine 149, and serine 254 each act as charge relay system; for autoendoproteolytic cleavage activity in the active site. Serine 254 functions as the Schiff-base intermediate with substrate; via pyruvic acid; for decarboxylase activity in the catalytic mechanism. Position 254 is a pyruvic acid (Ser); by autocatalysis (serine 254).

It belongs to the phosphatidylserine decarboxylase family. PSD-B subfamily. Prokaryotic type I sub-subfamily. In terms of assembly, heterodimer of a large membrane-associated beta subunit and a small pyruvoyl-containing alpha subunit. Pyruvate is required as a cofactor. Is synthesized initially as an inactive proenzyme. Formation of the active enzyme involves a self-maturation process in which the active site pyruvoyl group is generated from an internal serine residue via an autocatalytic post-translational modification. Two non-identical subunits are generated from the proenzyme in this reaction, and the pyruvate is formed at the N-terminus of the alpha chain, which is derived from the carboxyl end of the proenzyme. The autoendoproteolytic cleavage occurs by a canonical serine protease mechanism, in which the side chain hydroxyl group of the serine supplies its oxygen atom to form the C-terminus of the beta chain, while the remainder of the serine residue undergoes an oxidative deamination to produce ammonia and the pyruvoyl prosthetic group on the alpha chain. During this reaction, the Ser that is part of the protease active site of the proenzyme becomes the pyruvoyl prosthetic group, which constitutes an essential element of the active site of the mature decarboxylase.

Its subcellular location is the cell membrane. It catalyses the reaction a 1,2-diacyl-sn-glycero-3-phospho-L-serine + H(+) = a 1,2-diacyl-sn-glycero-3-phosphoethanolamine + CO2. The protein operates within phospholipid metabolism; phosphatidylethanolamine biosynthesis; phosphatidylethanolamine from CDP-diacylglycerol: step 2/2. Functionally, catalyzes the formation of phosphatidylethanolamine (PtdEtn) from phosphatidylserine (PtdSer). The protein is Phosphatidylserine decarboxylase proenzyme of Bordetella bronchiseptica (strain ATCC BAA-588 / NCTC 13252 / RB50) (Alcaligenes bronchisepticus).